The sequence spans 524 residues: Solute carrier family 35 member F5 (524 aa).

2 helical membrane-spanning segments follow: residues 69 to 89 and 101 to 121; these read MALG…SSEL and FFST…FIIW. At Ser-207 the chain carries Phosphoserine. 8 helical membrane-spanning segments follow: residues 244-264, 269-289, 297-317, 328-348, 362-382, 396-416, 421-441, and 453-473; these read ISFF…EALS, AIVN…AAVF, FTLS…LVNL, TIGS…IVMI, MFFG…FFLL, VVLL…EFLW, FLTS…LSII, and WLFF…TLLC. The EamA domain occupies 253–317; sequence FLANLSYQEA…SIGGVVLVNL (65 aa).

The protein belongs to the SLC35F solute transporter family.

Its subcellular location is the membrane. Putative solute transporter. The chain is Solute carrier family 35 member F5 (Slc35f5) from Mus musculus (Mouse).